A 284-amino-acid polypeptide reads, in one-letter code: Bifunctional protein FolD (284 aa).

NADP(+) contacts are provided by residues 166–168 and isoleucine 232; that span reads GAS.

This sequence belongs to the tetrahydrofolate dehydrogenase/cyclohydrolase family. Homodimer.

The enzyme catalyses (6R)-5,10-methylene-5,6,7,8-tetrahydrofolate + NADP(+) = (6R)-5,10-methenyltetrahydrofolate + NADPH. The catalysed reaction is (6R)-5,10-methenyltetrahydrofolate + H2O = (6R)-10-formyltetrahydrofolate + H(+). It functions in the pathway one-carbon metabolism; tetrahydrofolate interconversion. Functionally, catalyzes the oxidation of 5,10-methylenetetrahydrofolate to 5,10-methenyltetrahydrofolate and then the hydrolysis of 5,10-methenyltetrahydrofolate to 10-formyltetrahydrofolate. This is Bifunctional protein FolD from Pseudomonas fluorescens (strain ATCC BAA-477 / NRRL B-23932 / Pf-5).